The primary structure comprises 320 residues: Putative cyclin-D7-1 (320 aa).

Residues 1–46 (MDDDDDTSFNNSLDLYCDEDPFDSTPPPPPPPPEQQQQAGTTTPDD) form a disordered region. Residues 24-34 (STPPPPPPPPE) are compositionally biased toward pro residues. Residues 35 to 44 (QQQQAGTTTP) are compositionally biased toward low complexity.

The protein belongs to the cyclin family. Cyclin D subfamily.

The polypeptide is Putative cyclin-D7-1 (CYCD7-1) (Oryza sativa subsp. japonica (Rice)).